The chain runs to 224 residues: Peptidyl-tRNA hydrolase (224 aa).

A tRNA-binding site is contributed by Tyr-27. His-32 (proton acceptor) is an active-site residue. Residues Tyr-78, Asn-80, and Asn-126 each coordinate tRNA. Residues Leu-203–Pro-215 are compositionally biased toward low complexity. The disordered stretch occupies residues Leu-203 to Ser-224.

This sequence belongs to the PTH family. Monomer.

It is found in the cytoplasm. It catalyses the reaction an N-acyl-L-alpha-aminoacyl-tRNA + H2O = an N-acyl-L-amino acid + a tRNA + H(+). In terms of biological role, hydrolyzes ribosome-free peptidyl-tRNAs (with 1 or more amino acids incorporated), which drop off the ribosome during protein synthesis, or as a result of ribosome stalling. Catalyzes the release of premature peptidyl moieties from peptidyl-tRNA molecules trapped in stalled 50S ribosomal subunits, and thus maintains levels of free tRNAs and 50S ribosomes. The chain is Peptidyl-tRNA hydrolase from Synechococcus sp. (strain JA-2-3B'a(2-13)) (Cyanobacteria bacterium Yellowstone B-Prime).